Reading from the N-terminus, the 70-residue chain is DNA gyrase inhibitor YacG (70 aa).

The Zn(2+) site is built by Cys21, Cys24, Cys36, and Cys40.

It belongs to the DNA gyrase inhibitor YacG family. Interacts with GyrB. Zn(2+) is required as a cofactor.

Functionally, inhibits all the catalytic activities of DNA gyrase by preventing its interaction with DNA. Acts by binding directly to the C-terminal domain of GyrB, which probably disrupts DNA binding by the gyrase. In Sinorhizobium medicae (strain WSM419) (Ensifer medicae), this protein is DNA gyrase inhibitor YacG.